The chain runs to 303 residues: Lysosomal amino acid transporter 1 homolog (303 aa).

At 1-38 (MAEGLRAPPPPGNGSECPDGARWVLRLLGECARDGRDV) the chain is on the lumenal side. N-linked (GlcNAc...) asparagine glycosylation occurs at Asn-13. Residues 36–102 (RDVGSALLGL…LANQLPLQVY (67 aa)) enclose the PQ-loop 1 domain. Residues 39-59 (GSALLGLLSIGCFAAAALPQF) form a helical membrane-spanning segment. Residues 60–73 (YQACKTGIMDRALS) lie on the Cytoplasmic side of the membrane. A helical transmembrane segment spans residues 74–94 (IYFLLGWLGGDLLNLIGSFLA). Residues 95–96 (NQ) lie on the Lumenal side of the membrane. Residues 97-117 (LPLQVYTAVYYVLADLVMLSL) form a helical membrane-spanning segment. Topologically, residues 118–131 (YGYYKAKNWGTGAT) are cytoplasmic. Residues 132-152 (ASINAACLFCLLGTATTLTVL) traverse the membrane as a helical segment. Topologically, residues 153-182 (SHDTGPAPNPAAFGGRSLLSLGLEGPGPEP) are lumenal. Residues 183 to 203 (ISKTEIIGFAIGSISSVLYLC) form a helical membrane-spanning segment. In terms of domain architecture, PQ-loop 2 spans 186 to 251 (TEIIGFAIGS…LKNPEPGQSE (66 aa)). At 204–220 (SRLPQIYTNYRRKSTAG) the chain is on the cytoplasmic side. Residues 221–241 (VSFLLFALVMLGNLLYGTSVL) form a helical membrane-spanning segment. Residues 242–260 (LKNPEPGQSEGDYILHHLP) are Lumenal-facing. Residues 261-281 (WLIGSLGVLSLDVIISFQFLA) form a helical membrane-spanning segment. Over 282 to 303 (YRTGQPSAGEEREALLAEHGDS) the chain is Cytoplasmic. The Di-leucine motif signature appears at 296–297 (LL).

It belongs to the laat-1 family.

It localises to the lysosome membrane. Functionally, amino acid transporter that specifically mediates the pH-dependent export of the cationic amino acids arginine, histidine and lysine from lysosomes. In Gallus gallus (Chicken), this protein is Lysosomal amino acid transporter 1 homolog (SLC66A1).